The following is a 396-amino-acid chain: MAKEKFTRTKPHVNVGTIGHIDHGKTTLTAALVKVQSKRNLAKAISYADIAKGGTVRDETKTVTIAAAHVEYESANRHYAHVDCPGHADYIKNMITGAAQMDGAILVVSSLDSVMPQTREHVLLARQVGLNHIVVFLNKCDAVDDPEMLDLVEMEVRELLSKYKFDGDNAPVVRGASLPALQGDPKWEETIQQLLSALDSYIPEPVRDIDKPFLMAIEDVFSIKGRGTVATGRIERGVIKVGDEVQIIGFKDTKKSVVTGVEMFRKLLDQGQAGDNVGCLLRGVEKEEIERGQVLAKPGSITPHTKFTGEVYVLKKEEGGRHTPFFTNYRPQFYIRTTDVTGTVNLPEGVKMVMPGDNITMTIELIAPVALEEQMRFAIREGGKTVGAGVVTKILA.

The region spanning 10-206 (KPHVNVGTIG…ALDSYIPEPV (197 aa)) is the tr-type G domain. Residues 19 to 26 (GHIDHGKT) are G1. A GTP-binding site is contributed by 19 to 26 (GHIDHGKT). Thr26 contacts Mg(2+). The interval 60–64 (TKTVT) is G2. The G3 stretch occupies residues 83-86 (DCPG). GTP is bound by residues 83-87 (DCPGH) and 138-141 (NKCD). Residues 138-141 (NKCD) form a G4 region. Residues 176 to 178 (ASL) are G5.

It belongs to the TRAFAC class translation factor GTPase superfamily. Classic translation factor GTPase family. EF-Tu/EF-1A subfamily. Monomer.

It is found in the cytoplasm. It catalyses the reaction GTP + H2O = GDP + phosphate + H(+). GTP hydrolase that promotes the GTP-dependent binding of aminoacyl-tRNA to the A-site of ribosomes during protein biosynthesis. The sequence is that of Elongation factor Tu from Sorangium cellulosum (strain So ce56) (Polyangium cellulosum (strain So ce56)).